Reading from the N-terminus, the 178-residue chain is Glutamyl-tRNA(Gln) amidotransferase subunit C, mitochondrial (178 aa).

The N-terminal 31 residues, Met1 to Val31, are a transit peptide targeting the mitochondrion. The tract at residues Ser26 to Gln67 is disordered. Over residues Ser37 to Lys46 the composition is skewed to basic and acidic residues.

The protein belongs to the GatC family. Subunit of the heterotrimeric GatCAB amidotransferase (AdT) complex, composed of A, B and C subunits.

The protein resides in the mitochondrion. The enzyme catalyses L-glutamyl-tRNA(Gln) + L-glutamine + ATP + H2O = L-glutaminyl-tRNA(Gln) + L-glutamate + ADP + phosphate + H(+). Functionally, allows the formation of correctly charged Gln-tRNA(Gln) through the transamidation of misacylated Glu-tRNA(Gln) in the mitochondria. The reaction takes place in the presence of glutamine and ATP through an activated gamma-phospho-Glu-tRNA(Gln). This Aedes aegypti (Yellowfever mosquito) protein is Glutamyl-tRNA(Gln) amidotransferase subunit C, mitochondrial.